The primary structure comprises 1046 residues: Protein jim lovell (1046 aa).

A disordered region spans residues 54-109 (TSDHAPMHSTPPTTPPTPPPLPLNMSQSASAVTEAATPENSLPATPPSEGALAVPS). Positions 65–75 (PTTPPTPPPLP) are enriched in pro residues. One can recognise a BTB domain in the interval 140-205 (VDVTLVCAET…MYRGEISVPQ (66 aa)). 7 disordered regions span residues 290–342 (LRRK…DAES), 355–501 (AERD…KLQD), 632–655 (PPFGGHNGGHPGNSGPGNGCPGQA), 686–719 (EFGPASPMSLQGPFNAPDGPPHPPSPLPFPGMSS), 758–791 (RDMPGGPPPFLKKKMPRPKGQHSAPRGGPPRSWT), 851–947 (EMLQ…APNA), and 998–1046 (DCKS…TGHD). Residues 294-303 (REQESDRDLE) show a composition bias toward basic and acidic residues. The span at 315 to 324 (PRRKQARPRR) shows a compositional bias: basic residues. A compositionally biased stretch (polar residues) spans 365–380 (QDNSQGEAEKISSSPA). A compositionally biased stretch (basic and acidic residues) spans 383–412 (LVERAKEQKSMKEEGSDQPRSLNENHHQLE). A compositionally biased stretch (acidic residues) spans 413 to 432 (LDDEDDDDQDHEEEEEQDIE). Residues 433–443 (ELIHTTNELRR) are compositionally biased toward basic and acidic residues. Residues 445-454 (AAAAAANAAA) are compositionally biased toward low complexity. The span at 636 to 651 (GHNGGHPGNSGPGNGC) shows a compositional bias: gly residues. The span at 703–714 (DGPPHPPSPLPF) shows a compositional bias: pro residues. Residues 768–777 (LKKKMPRPKG) are compositionally biased toward basic residues. The region spanning 781–833 (APRGGPPRSWTNTELTEALQHVWNKKMTTSQASRIFGIPYNSLLMYVRGKYGK) is the HTH psq-type domain. Residues 866-881 (KNEKSKERKEKEKDKN) are compositionally biased toward basic and acidic residues. Composition is skewed to low complexity over residues 882–897 (SMSSNGSGGSANSQGG) and 912–925 (LGPMGQLDLDLGLP).

In terms of tissue distribution, initially expressed at blastoderm stage, transient accumulation at dorso-lateral positions of the embryo and differences along the longitudinal axis. At later stages of embryogenesis, expression is found exclusively in neural anlagen. Expressed in 4 posterior-most ventral unpaired median interneurons (VUM) neurons, VUM interneurons and one progeny of the median neuroblast (MNB).

The protein localises to the nucleus. Has a regulatory role during midline cell development. The sequence is that of Protein jim lovell (lov) from Drosophila melanogaster (Fruit fly).